Reading from the N-terminus, the 313-residue chain is Protoheme IX farnesyltransferase (313 aa).

Helical transmembrane passes span 34-54 (VIEL…RGTV), 56-76 (PLLI…ANTL), 105-125 (HALI…WWTT), 128-148 (LSAH…TLVL), 152-172 (TSQN…IGWS), 173-193 (AVTG…FFWT), 243-263 (LALA…TWFL), and 291-311 (YLAV…PTLF).

It belongs to the UbiA prenyltransferase family. Protoheme IX farnesyltransferase subfamily.

Its subcellular location is the cell membrane. It carries out the reaction heme b + (2E,6E)-farnesyl diphosphate + H2O = Fe(II)-heme o + diphosphate. It participates in porphyrin-containing compound metabolism; heme O biosynthesis; heme O from protoheme: step 1/1. In terms of biological role, converts heme B (protoheme IX) to heme O by substitution of the vinyl group on carbon 2 of heme B porphyrin ring with a hydroxyethyl farnesyl side group. The protein is Protoheme IX farnesyltransferase of Mycolicibacterium vanbaalenii (strain DSM 7251 / JCM 13017 / BCRC 16820 / KCTC 9966 / NRRL B-24157 / PYR-1) (Mycobacterium vanbaalenii).